The sequence spans 624 residues: tRNA uridine 5-carboxymethylaminomethyl modification enzyme MnmG (624 aa).

FAD is bound by residues 16 to 21 (GAGHAG), Val128, and Ser183. Residue 275-289 (GPRYCPSIEDKVVRF) participates in NAD(+) binding. Gln372 is an FAD binding site.

It belongs to the MnmG family. In terms of assembly, homodimer. Heterotetramer of two MnmE and two MnmG subunits. It depends on FAD as a cofactor.

The protein resides in the cytoplasm. Functionally, NAD-binding protein involved in the addition of a carboxymethylaminomethyl (cmnm) group at the wobble position (U34) of certain tRNAs, forming tRNA-cmnm(5)s(2)U34. The chain is tRNA uridine 5-carboxymethylaminomethyl modification enzyme MnmG from Geobacter metallireducens (strain ATCC 53774 / DSM 7210 / GS-15).